A 406-amino-acid polypeptide reads, in one-letter code: Argininosuccinate synthase (406 aa).

ATP contacts are provided by residues 13–21 (AYSGGLDTS) and Ala40. Residues Tyr91 and Ser96 each contribute to the L-citrulline site. Gly121 lines the ATP pocket. Residues Thr123, Asn127, and Asp128 each contribute to the L-aspartate site. Asn127 is a binding site for L-citrulline. Residues Arg131, Ser182, Ser191, Glu267, and Tyr279 each contribute to the L-citrulline site.

It belongs to the argininosuccinate synthase family. Type 1 subfamily. Homotetramer.

It localises to the cytoplasm. It carries out the reaction L-citrulline + L-aspartate + ATP = 2-(N(omega)-L-arginino)succinate + AMP + diphosphate + H(+). It participates in amino-acid biosynthesis; L-arginine biosynthesis; L-arginine from L-ornithine and carbamoyl phosphate: step 2/3. In Brucella anthropi (strain ATCC 49188 / DSM 6882 / CCUG 24695 / JCM 21032 / LMG 3331 / NBRC 15819 / NCTC 12168 / Alc 37) (Ochrobactrum anthropi), this protein is Argininosuccinate synthase.